The following is a 62-amino-acid chain: MTLVFQLAVFALIATSSILLISVPVVFASPDGWSSNKNVVFSGTSLWIGLVFLVGILNSLIS.

Helical transmembrane passes span 8-28 (AVFA…VVFA) and 41-61 (FSGT…NSLI).

Belongs to the PsbZ family. As to quaternary structure, PSII is composed of 1 copy each of membrane proteins PsbA, PsbB, PsbC, PsbD, PsbE, PsbF, PsbH, PsbI, PsbJ, PsbK, PsbL, PsbM, PsbT, PsbY, PsbZ, Psb30/Ycf12, at least 3 peripheral proteins of the oxygen-evolving complex and a large number of cofactors. It forms dimeric complexes.

It localises to the plastid. It is found in the chloroplast thylakoid membrane. In terms of biological role, may control the interaction of photosystem II (PSII) cores with the light-harvesting antenna, regulates electron flow through the 2 photosystem reaction centers. PSII is a light-driven water plastoquinone oxidoreductase, using light energy to abstract electrons from H(2)O, generating a proton gradient subsequently used for ATP formation. This chain is Photosystem II reaction center protein Z, found in Jasminum nudiflorum (Winter jasmine).